A 120-amino-acid chain; its full sequence is MARATNAPQSRKRRKRLLRDARGFRGRRSKLFRYAKDALYKARYWSYRDRKNRKREFRALWIQRINAACRKRGMTYSRFMEALRKAGIGVNRKMLAELAVRSQEDFDQIFKLAKEGNLAS.

Belongs to the bacterial ribosomal protein bL20 family.

In terms of biological role, binds directly to 23S ribosomal RNA and is necessary for the in vitro assembly process of the 50S ribosomal subunit. It is not involved in the protein synthesizing functions of that subunit. This is Large ribosomal subunit protein bL20 from Methylacidiphilum infernorum (isolate V4) (Methylokorus infernorum (strain V4)).